The chain runs to 168 residues: Xanthine-guanine phosphoribosyltransferase (168 aa).

5-phospho-alpha-D-ribose 1-diphosphate is bound by residues 46-47 (RG) and 101-109 (DDLVDSGVT). Position 102 (Asp102) interacts with Mg(2+). Asp105 serves as a coordination point for guanine. 2 residues coordinate xanthine: Asp105 and Val148. Residues 105-109 (DSGVT) and 147-148 (WV) each bind GMP.

Belongs to the purine/pyrimidine phosphoribosyltransferase family. XGPT subfamily. In terms of assembly, homotetramer. It depends on Mg(2+) as a cofactor.

The protein resides in the cell inner membrane. The catalysed reaction is GMP + diphosphate = guanine + 5-phospho-alpha-D-ribose 1-diphosphate. The enzyme catalyses XMP + diphosphate = xanthine + 5-phospho-alpha-D-ribose 1-diphosphate. It catalyses the reaction IMP + diphosphate = hypoxanthine + 5-phospho-alpha-D-ribose 1-diphosphate. The protein operates within purine metabolism; GMP biosynthesis via salvage pathway; GMP from guanine: step 1/1. It functions in the pathway purine metabolism; XMP biosynthesis via salvage pathway; XMP from xanthine: step 1/1. Its function is as follows. Purine salvage pathway enzyme that catalyzes the transfer of the ribosyl-5-phosphate group from 5-phospho-alpha-D-ribose 1-diphosphate (PRPP) to the N9 position of the 6-oxopurines guanine and xanthine to form the corresponding ribonucleotides GMP (guanosine 5'-monophosphate) and XMP (xanthosine 5'-monophosphate), with the release of PPi. To a lesser extent, also acts on hypoxanthine. This is Xanthine-guanine phosphoribosyltransferase from Gluconobacter oxydans (strain 621H) (Gluconobacter suboxydans).